A 333-amino-acid polypeptide reads, in one-letter code: Starch-binding domain-containing protein 1 (333 aa).

Topologically, residues 1–6 (MGAVWS) are extracellular. A helical membrane pass occupies residues 7 to 23 (ALLVGGGLAGALILWLL). Residues 24–333 (RGDSGAPGKD…KVVHGWWGIH (310 aa)) lie on the Cytoplasmic side of the membrane. Disordered stretches follow at residues 31-73 (GKDG…ELVS) and 106-139 (NAREYVPVGKVPDTHSRANSETSRNQSPESRVGE). The segment covering 50 to 61 (PGGGPGGGGSGG) has biased composition (gly residues). Residue Ser-67 is modified to Phosphoserine. Residues 124 to 134 (NSETSRNQSPE) show a composition bias toward polar residues. Phosphoserine is present on residues Ser-135 and Ser-162. Residues 181–187 (HEDWEVV) carry the LIR motif. Residues Ser-191, Ser-192, Ser-201, Ser-205, Ser-208, Ser-216, and Ser-219 each carry the phosphoserine modification. Residues 233-332 (SVKPRQVSIQ…DKVVHGWWGI (100 aa)) enclose the CBM20 domain.

In terms of assembly, interacts with the ATG8 family proteins GABARAP and GABARAPL1. Interacts with several glycogen-associated proteins, such as GYS2 (liver glycogen synthase), GDE (glycogen debranching enzyme), GBE1 (glycogen branching enzyme 1) and EPM2A (Laforin). Post-translationally, ubiquitinated, which leads to proteasomal degradation.

It is found in the preautophagosomal structure membrane. The protein resides in the endoplasmic reticulum membrane. It localises to the cell membrane. The protein localises to the sarcolemma. Its subcellular location is the T-tubule. Its function is as follows. Acts as a cargo receptor for glycogen. Delivers its cargo to an autophagic pathway called glycophagy, resulting in the transport of glycogen to lysosomes. The protein is Starch-binding domain-containing protein 1 of Rattus norvegicus (Rat).